The chain runs to 227 residues: Deoxyribose-phosphate aldolase (227 aa).

Catalysis depends on Asp84, which acts as the Proton donor/acceptor. Lys146 acts as the Schiff-base intermediate with acetaldehyde in catalysis. Residue Lys188 is the Proton donor/acceptor of the active site.

The protein belongs to the DeoC/FbaB aldolase family. DeoC type 1 subfamily.

It localises to the cytoplasm. It catalyses the reaction 2-deoxy-D-ribose 5-phosphate = D-glyceraldehyde 3-phosphate + acetaldehyde. It functions in the pathway carbohydrate degradation; 2-deoxy-D-ribose 1-phosphate degradation; D-glyceraldehyde 3-phosphate and acetaldehyde from 2-deoxy-alpha-D-ribose 1-phosphate: step 2/2. Functionally, catalyzes a reversible aldol reaction between acetaldehyde and D-glyceraldehyde 3-phosphate to generate 2-deoxy-D-ribose 5-phosphate. The protein is Deoxyribose-phosphate aldolase of Pyrobaculum islandicum (strain DSM 4184 / JCM 9189 / GEO3).